The following is a 157-amino-acid chain: SsrA-binding protein (157 aa).

The interval 132–157 (EHDKRDTIKEREGKREVERAMKSRHR) is disordered.

The protein belongs to the SmpB family.

The protein resides in the cytoplasm. Required for rescue of stalled ribosomes mediated by trans-translation. Binds to transfer-messenger RNA (tmRNA), required for stable association of tmRNA with ribosomes. tmRNA and SmpB together mimic tRNA shape, replacing the anticodon stem-loop with SmpB. tmRNA is encoded by the ssrA gene; the 2 termini fold to resemble tRNA(Ala) and it encodes a 'tag peptide', a short internal open reading frame. During trans-translation Ala-aminoacylated tmRNA acts like a tRNA, entering the A-site of stalled ribosomes, displacing the stalled mRNA. The ribosome then switches to translate the ORF on the tmRNA; the nascent peptide is terminated with the 'tag peptide' encoded by the tmRNA and targeted for degradation. The ribosome is freed to recommence translation, which seems to be the essential function of trans-translation. This chain is SsrA-binding protein, found in Paracidovorax citrulli (strain AAC00-1) (Acidovorax citrulli).